A 241-amino-acid chain; its full sequence is MPTLGVNIDHIATIRQARRTVEPDPVAAAVLAELAGADGITVHLREDRRHIQDRDVRILRQTVRSHLNLEMAATEEMLAIALDIKPDYVTLVPEKREEVTTEGGLDIIGQIARIGEIVDKLQSASIPVSLFIDAEPAQIEASVKVQAQFIELHTGQYAEAKDETNRHRELAILAKGCQQAIQAGLRVNAGHGLTYWNVYPVAALPGMEELNIGHTIISRAALVGIERAVREMKQAIRGNGA.

Position 7 (N7) interacts with 3-amino-2-oxopropyl phosphate. Position 9–10 (9–10 (DH)) interacts with 1-deoxy-D-xylulose 5-phosphate. A 3-amino-2-oxopropyl phosphate-binding site is contributed by R18. Residue H43 is the Proton acceptor of the active site. 2 residues coordinate 1-deoxy-D-xylulose 5-phosphate: R45 and H50. Catalysis depends on E70, which acts as the Proton acceptor. T100 lines the 1-deoxy-D-xylulose 5-phosphate pocket. H191 functions as the Proton donor in the catalytic mechanism. Residues G192 and 213-214 (GH) contribute to the 3-amino-2-oxopropyl phosphate site.

It belongs to the PNP synthase family. In terms of assembly, homooctamer; tetramer of dimers.

The protein localises to the cytoplasm. The catalysed reaction is 3-amino-2-oxopropyl phosphate + 1-deoxy-D-xylulose 5-phosphate = pyridoxine 5'-phosphate + phosphate + 2 H2O + H(+). It functions in the pathway cofactor biosynthesis; pyridoxine 5'-phosphate biosynthesis; pyridoxine 5'-phosphate from D-erythrose 4-phosphate: step 5/5. Its function is as follows. Catalyzes the complicated ring closure reaction between the two acyclic compounds 1-deoxy-D-xylulose-5-phosphate (DXP) and 3-amino-2-oxopropyl phosphate (1-amino-acetone-3-phosphate or AAP) to form pyridoxine 5'-phosphate (PNP) and inorganic phosphate. The sequence is that of Pyridoxine 5'-phosphate synthase from Nostoc punctiforme (strain ATCC 29133 / PCC 73102).